A 232-amino-acid chain; its full sequence is Sugar fermentation stimulation protein homolog (232 aa).

This sequence belongs to the SfsA family.

This Ruegeria sp. (strain TM1040) (Silicibacter sp.) protein is Sugar fermentation stimulation protein homolog.